The sequence spans 183 residues: Ribosome maturation factor RimM (183 aa).

The 77-residue stretch at aspartate 95–leucine 171 folds into the PRC barrel domain.

The protein belongs to the RimM family. As to quaternary structure, binds ribosomal protein uS19.

Its subcellular location is the cytoplasm. Functionally, an accessory protein needed during the final step in the assembly of 30S ribosomal subunit, possibly for assembly of the head region. Essential for efficient processing of 16S rRNA. May be needed both before and after RbfA during the maturation of 16S rRNA. It has affinity for free ribosomal 30S subunits but not for 70S ribosomes. The polypeptide is Ribosome maturation factor RimM (Rhodococcus opacus (strain B4)).